We begin with the raw amino-acid sequence, 556 residues long: Potassium-transporting ATPase potassium-binding subunit (556 aa).

A run of 12 helical transmembrane segments spans residues Ala-3–Leu-23, Ala-57–Leu-77, Gly-129–Met-149, Leu-172–Pro-192, Leu-247–Phe-267, Trp-278–Ala-298, Leu-319–Val-339, Leu-346–Gly-366, Gly-371–Gly-391, Leu-408–Ile-428, Phe-486–Pro-506, and Gly-516–Phe-536.

Belongs to the KdpA family. As to quaternary structure, the system is composed of three essential subunits: KdpA, KdpB and KdpC.

The protein localises to the cell inner membrane. In terms of biological role, part of the high-affinity ATP-driven potassium transport (or Kdp) system, which catalyzes the hydrolysis of ATP coupled with the electrogenic transport of potassium into the cytoplasm. This subunit binds the periplasmic potassium ions and delivers the ions to the membrane domain of KdpB through an intramembrane tunnel. In Paramagnetospirillum magneticum (strain ATCC 700264 / AMB-1) (Magnetospirillum magneticum), this protein is Potassium-transporting ATPase potassium-binding subunit.